The chain runs to 470 residues: Cyclin-B1-3 (470 aa).

This sequence belongs to the cyclin family. Cyclin AB subfamily.

The sequence is that of Cyclin-B1-3 (CYCB1-3) from Oryza sativa subsp. japonica (Rice).